The following is a 57-amino-acid chain: UPF0391 membrane protein bsl6560 (57 aa).

Helical transmembrane passes span 4–24 (WVVT…GGIA) and 30–50 (IAKI…VVGL).

This sequence belongs to the UPF0391 family.

It is found in the cell membrane. This chain is UPF0391 membrane protein bsl6560, found in Bradyrhizobium diazoefficiens (strain JCM 10833 / BCRC 13528 / IAM 13628 / NBRC 14792 / USDA 110).